The sequence spans 305 residues: Tetraspanin-12 (305 aa).

Topologically, residues 1-12 are cytoplasmic; it reads MAREDSVKCLRC. Residues cysteine 9 and cysteine 12 are each lipidated (S-palmitoyl cysteine). The helical transmembrane segment at 13–33 threads the bilayer; the sequence is LLYALNLLFWLMSISVLAVSA. Residues 34–59 are Extracellular-facing; the sequence is WMRDYLNNVLTLTAETRVEEAVILTY. A helical transmembrane segment spans residues 60–80; that stretch reads FPVVHPVMIAVCCFLIIVGML. Residues 81-89 are Cytoplasmic-facing; the sequence is GYCGTVKRN. Residue cysteine 83 is the site of S-palmitoyl cysteine attachment. Residues 90–110 form a helical membrane-spanning segment; it reads LLLLAWYFGSLLVIFCVELAC. The Extracellular portion of the chain corresponds to 111–224; it reads GVWTYEQELM…RGTKQLQVLR (114 aa). Residues 225–245 traverse the membrane as a helical segment; it reads FLGISIGVTQILAMILTITLL. Residues 246–305 are Cytoplasmic-facing; the sequence is WALYYDRREPGTDQMMSLKNDNSQHLSCPSVELLKPSLSRIFEHTSMANSFNTHFEMEEL.

Belongs to the tetraspanin (TM4SF) family. In terms of assembly, component of a complex, at least composed of TSPAN12, FZD4 and norrin (NDP). Interacts (when palmitoylated) with ADAM10. Interacts with MMP14/MT1-MMP. In terms of processing, palmitoylated; required for interaction with ADAM10. The precise position of palmitoylated residues is unclear and occurs either on Cys-9, Cys-12 and/or Cys-83.

It localises to the cell membrane. In terms of biological role, regulator of cell surface receptor signal transduction. Plays a central role in retinal vascularization by regulating norrin (NDP) signal transduction. Acts in concert with norrin (NDP) to promote FZD4 multimerization and subsequent activation of FZD4, leading to promote accumulation of beta-catenin (CTNNB1) and stimulate LEF/TCF-mediated transcriptional programs. Suprisingly, it only activates the norrin (NDP)-dependent activation of FZD4, while it does not activate the Wnt-dependent activation of FZD4, suggesting the existence of a Wnt-independent signaling that also promote accumulation the beta-catenin (CTNNB1). Acts as a regulator of membrane proteinases such as ADAM10 and MMP14/MT1-MMP. Activates ADAM10-dependent cleavage activity of amyloid precursor protein (APP). Activates MMP14/MT1-MMP-dependent cleavage activity. In Homo sapiens (Human), this protein is Tetraspanin-12 (TSPAN12).